We begin with the raw amino-acid sequence, 187 residues long: UPF0301 protein SG2023 (187 aa).

The protein belongs to the UPF0301 (AlgH) family.

This chain is UPF0301 protein SG2023, found in Sodalis glossinidius (strain morsitans).